The primary structure comprises 492 residues: G protein-activated inward rectifier potassium channel 1 (492 aa).

Topologically, residues 1 to 72 are cytoplasmic; it reads MSALRRKLGD…LFTTLVDLKW (72 aa). The disordered stretch occupies residues 16-35; sequence STSASGGGLPPPRAAPRGKR. A helical transmembrane segment spans residues 73 to 97; sequence RWNLFIFVLTYTVAWLFMASMWWVI. Residues 98–121 lie on the Extracellular side of the membrane; sequence AYMRGDLNKAHDDSYTPCVANVYN. The segment at residues 122 to 133 is an intramembrane region (helical; Pore-forming); the sequence is FPSAFLFFIETE. Positions 134 to 140 form an intramembrane region, pore-forming; it reads ATIGYGY. A Selectivity filter motif is present at residues 135–140; that stretch reads TIGYGY. At 141–149 the chain is on the extracellular side; it reads RYITDKCPE. Residues 150–171 form a helical membrane-spanning segment; it reads GIILFLFQSILGSIVDAFLIGC. At 172-492 the chain is on the cytoplasmic side; that stretch reads MFIKMSQPKK…LRKMNSDRFT (321 aa). The tract at residues 174–201 is polyphosphoinositide (PIP2)-binding; the sequence is IKMSQPKKRAETLMFSEHAAISMRDGKL. The segment at 452 to 492 is disordered; it reads SDPMSQSVADLPPKLQKLSGGGRMEGNLPPKLRKMNSDRFT.

Belongs to the inward rectifier-type potassium channel (TC 1.A.2.1) family. KCNJ3 subfamily. In terms of assembly, associates with KCNJ5/GIRK4 or KCNJ6/GIRK2 or KCNJ9/GIRK3 to form a G-protein activated heteromultimer pore-forming unit. The resulting inward current is much larger.

The protein localises to the membrane. It catalyses the reaction K(+)(in) = K(+)(out). With respect to regulation, heteromultimer composed of KCNJ3/GIRK1 and KCNJ5/GIRK4 is activated by phosphatidylinositol 4,5 biphosphate (PtdIns(4,5)P2). Its function is as follows. Inward rectifier potassium channels are characterized by a greater tendency to allow potassium to flow into the cell rather than out of it. Their voltage dependence is regulated by the concentration of extracellular potassium; as external potassium is raised, the voltage range of the channel opening shifts to more positive voltages. The inward rectification is mainly due to the blockage of outward current by internal magnesium. This potassium channel is controlled by G proteins. This receptor plays a crucial role in regulating the heartbeat. This Gallus gallus (Chicken) protein is G protein-activated inward rectifier potassium channel 1 (KCNJ3).